The sequence spans 242 residues: Stress response regulator protein 1 (242 aa).

The Response regulatory domain occupies 118–236 (NFLLVDDNFI…FDHIITCIEK (119 aa)). 4-aspartylphosphate is present on D169.

Required for stress adaptation, morphogenesis and virulence. The sequence is that of Stress response regulator protein 1 (SRR1) from Debaryomyces hansenii (strain ATCC 36239 / CBS 767 / BCRC 21394 / JCM 1990 / NBRC 0083 / IGC 2968) (Yeast).